A 156-amino-acid chain; its full sequence is 6,7-dimethyl-8-ribityllumazine synthase (156 aa).

Residues phenylalanine 22, 56 to 58 (ALE), and 80 to 82 (AVI) contribute to the 5-amino-6-(D-ribitylamino)uracil site. (2S)-2-hydroxy-3-oxobutyl phosphate is bound at residue 85–86 (DT). The Proton donor role is filled by histidine 88. 5-amino-6-(D-ribitylamino)uracil is bound at residue phenylalanine 113. Arginine 127 lines the (2S)-2-hydroxy-3-oxobutyl phosphate pocket.

It belongs to the DMRL synthase family.

The catalysed reaction is (2S)-2-hydroxy-3-oxobutyl phosphate + 5-amino-6-(D-ribitylamino)uracil = 6,7-dimethyl-8-(1-D-ribityl)lumazine + phosphate + 2 H2O + H(+). The protein operates within cofactor biosynthesis; riboflavin biosynthesis; riboflavin from 2-hydroxy-3-oxobutyl phosphate and 5-amino-6-(D-ribitylamino)uracil: step 1/2. Its function is as follows. Catalyzes the formation of 6,7-dimethyl-8-ribityllumazine by condensation of 5-amino-6-(D-ribitylamino)uracil with 3,4-dihydroxy-2-butanone 4-phosphate. This is the penultimate step in the biosynthesis of riboflavin. This is 6,7-dimethyl-8-ribityllumazine synthase from Leuconostoc mesenteroides subsp. mesenteroides (strain ATCC 8293 / DSM 20343 / BCRC 11652 / CCM 1803 / JCM 6124 / NCDO 523 / NBRC 100496 / NCIMB 8023 / NCTC 12954 / NRRL B-1118 / 37Y).